Here is a 344-residue protein sequence, read N- to C-terminus: uncharacterized protein (344 aa).

The HTH araC/xylS-type domain maps to 242-343; the sequence is RGITALVRSK…GVAPSEYSRR (102 aa). 2 DNA-binding regions (H-T-H motif) span residues 263 to 284 and 310 to 333; these read TDVA…AEEG and VQQV…KRWY.

This is an uncharacterized protein from Mycobacterium bovis (strain ATCC BAA-935 / AF2122/97).